The following is a 299-amino-acid chain: Protein sprouty homolog 4 (299 aa).

N-acetylmethionine is present on Met1. Disordered regions lie at residues Asn55–Ala79 and Phe92–Pro126. Positions Phe92 to Ser107 are enriched in low complexity. Position 125 is a phosphoserine (Ser125). The 108-residue stretch at Lys166 to Cys273 folds into the SPR domain. Positions Val181 to Phe299 are required for interaction with TESK1. Required for colocalization with TESK1 at vesicular spots in the cytoplasm and inhibition of TESK1 kinase activity, resulting in inhibition of cell spreading.

This sequence belongs to the sprouty family. As to quaternary structure, interacts (via C-terminus) with TESK1 (via both C- and N-termini); the interaction inhibits TESK1 kinase activity. Interacts with RAF1. Interacts with CAV1 (via C-terminus).

The protein resides in the cytoplasm. It localises to the cell projection. Its subcellular location is the ruffle membrane. Its function is as follows. Suppresses the insulin receptor and EGFR-transduced MAPK signaling pathway, but does not inhibit MAPK activation by a constitutively active mutant Ras. Probably impairs the formation of GTP-Ras. Inhibits Ras-independent, but not Ras-dependent, activation of RAF1. Represses integrin-mediated cell spreading via inhibition of TESK1-mediated phosphorylation of cofilin. The protein is Protein sprouty homolog 4 (SPRY4) of Homo sapiens (Human).